We begin with the raw amino-acid sequence, 182 residues long: Putative adenylate kinase (182 aa).

5 residues coordinate ATP: glycine 10, glycine 12, lysine 13, threonine 14, and serine 15. Residues 30-53 (HLNEMIKEEHLYTEVDEVRDAVIA) form an NMP region. Residues 104–114 (ARGYSEEKIRE) are LID. ATP is bound by residues arginine 105 and lysine 143.

This sequence belongs to the adenylate kinase family. AK6 subfamily. Interacts with uS11. Not a structural component of 40S pre-ribosomes, but transiently interacts with them by binding to uS11.

The catalysed reaction is AMP + ATP = 2 ADP. It carries out the reaction ATP + H2O = ADP + phosphate + H(+). In terms of biological role, broad-specificity nucleoside monophosphate (NMP) kinase that catalyzes the reversible transfer of the terminal phosphate group between nucleoside triphosphates and monophosphates. Also has ATPase activity. Involved in the late maturation steps of the 30S ribosomal particles, specifically 16S rRNA maturation. While NMP activity is not required for ribosome maturation, ATPase activity is. Associates transiently with small ribosomal subunit protein uS11. ATP hydrolysis breaks the interaction with uS11. May temporarily remove uS11 from the ribosome to enable a conformational change of the ribosomal RNA that is needed for the final maturation step of the small ribosomal subunit. This is Putative adenylate kinase from Methanosarcina barkeri (strain Fusaro / DSM 804).